The following is a 394-amino-acid chain: Carbamoyl phosphate synthase small chain (394 aa).

Residues 1-188 (MIRKERAILA…PLPYAFPTLR (188 aa)) are CPSase. The L-glutamine site is built by S49, G240, and G242. One can recognise a Glutamine amidotransferase type-1 domain in the interval 192–379 (RVVLMDFGIK…IEEIDAFEGA (188 aa)). C267 (nucleophile) is an active-site residue. 5 residues coordinate L-glutamine: L268, Q271, N309, G311, and Y312. Active-site residues include H352 and E354.

The protein belongs to the CarA family. Composed of two chains; the small (or glutamine) chain promotes the hydrolysis of glutamine to ammonia, which is used by the large (or ammonia) chain to synthesize carbamoyl phosphate. Tetramer of heterodimers (alpha,beta)4.

The enzyme catalyses hydrogencarbonate + L-glutamine + 2 ATP + H2O = carbamoyl phosphate + L-glutamate + 2 ADP + phosphate + 2 H(+). It carries out the reaction L-glutamine + H2O = L-glutamate + NH4(+). The protein operates within amino-acid biosynthesis; L-arginine biosynthesis; carbamoyl phosphate from bicarbonate: step 1/1. It functions in the pathway pyrimidine metabolism; UMP biosynthesis via de novo pathway; (S)-dihydroorotate from bicarbonate: step 1/3. Its function is as follows. Small subunit of the glutamine-dependent carbamoyl phosphate synthetase (CPSase). CPSase catalyzes the formation of carbamoyl phosphate from the ammonia moiety of glutamine, carbonate, and phosphate donated by ATP, constituting the first step of 2 biosynthetic pathways, one leading to arginine and/or urea and the other to pyrimidine nucleotides. The small subunit (glutamine amidotransferase) binds and cleaves glutamine to supply the large subunit with the substrate ammonia. The sequence is that of Carbamoyl phosphate synthase small chain from Deinococcus geothermalis (strain DSM 11300 / CIP 105573 / AG-3a).